The following is a 356-amino-acid chain: Tyrosine recombinase XerS (356 aa).

In terms of domain architecture, Core-binding (CB) spans 16-121; that stretch reads IMPWYVLDYY…ALSSLYKYLT (106 aa). The Tyr recombinase domain maps to 169–354; the sequence is AFLDYVDKEY…VNDEQKNALD (186 aa). Residues Arg-210, Lys-234, His-306, Arg-309, and His-332 contribute to the active site. The active-site O-(3'-phospho-DNA)-tyrosine intermediate is the Tyr-341.

It belongs to the 'phage' integrase family. XerS subfamily.

The protein resides in the cytoplasm. With respect to regulation, ftsK is required for recombination. In terms of biological role, site-specific tyrosine recombinase, which acts by catalyzing the cutting and rejoining of the recombining DNA molecules. Essential to convert dimers of the bacterial chromosome into monomers to permit their segregation at cell division. This Streptococcus equi subsp. equi (strain 4047) protein is Tyrosine recombinase XerS.